The following is a 243-amino-acid chain: MKFLLLCVLLGAAAAFDDDKIIGGATCAKSSVPYIVSLNSGYHFCGGSLITNQWVVSAAHCYKASIQVRLGEHNIALSEGTEQFISSSKVIRHSGYNSYTLDNDIMLIKLSSPASLNAAVNTVPLPSGCSAAGTSCLISGWGNTLSNGSNYPDLLQCLNAPILTNAQCNSAYPGEITANMICVGYMEGGKDSCQGDSGGPVVCNGQLQGVVSWGYGCAMRNYPGVYTKVCNYNAWIQNTIAAN.

A signal peptide spans 1–15 (MKFLLLCVLLGAAAA). Positions 16-20 (FDDDK) are cleaved as a propeptide — activation peptide. The 221-residue stretch at 21–241 (IIGGATCAKS…YNAWIQNTIA (221 aa)) folds into the Peptidase S1 domain. 6 disulfide bridges follow: Cys27–Cys157, Cys45–Cys61, Cys129–Cys230, Cys136–Cys203, Cys168–Cys182, and Cys193–Cys217. The active-site Charge relay system is His60. Ca(2+)-binding residues include Glu72, Asn74, and Glu82. The active-site Charge relay system is the Asp104. Ser197 (charge relay system) is an active-site residue.

The protein belongs to the peptidase S1 family. Requires Ca(2+) as cofactor.

The protein resides in the secreted. The protein localises to the extracellular space. It catalyses the reaction Preferential cleavage: Arg-|-Xaa, Lys-|-Xaa.. The chain is Trypsin from Xenopus laevis (African clawed frog).